We begin with the raw amino-acid sequence, 239 residues long: Small ribosomal subunit protein uS3c (239 aa).

The KH type-2 domain maps to 43–139; it reads IKNYIQKNRK…RLNISIEKVK (97 aa). The segment at 50–80 is disordered; that stretch reads NRKKSSNRKLESDSSSEVITHNRKNDSGSSS.

This sequence belongs to the universal ribosomal protein uS3 family. Part of the 30S ribosomal subunit.

Its subcellular location is the plastid. The protein resides in the chloroplast. The polypeptide is Small ribosomal subunit protein uS3c (rps3) (Lolium perenne (Perennial ryegrass)).